The chain runs to 156 residues: Succinate dehydrogenase assembly factor 2-B, mitochondrial (156 aa).

A mitochondrion-targeting transit peptide spans 1–24; sequence MLRQFIISRVGRRLQLPMITQSRL.

The protein belongs to the SDHAF2 family. In terms of assembly, interacts with the flavoprotein subunit within the SDH catalytic dimer.

The protein localises to the mitochondrion matrix. In terms of biological role, plays an essential role in the assembly of succinate dehydrogenase (SDH), an enzyme complex (also referred to as respiratory complex II) that is a component of both the tricarboxylic acid (TCA) cycle and the mitochondrial electron transport chain, and which couples the oxidation of succinate to fumarate with the reduction of ubiquinone (coenzyme Q) to ubiquinol. Required for flavinylation (covalent attachment of FAD) of the flavoprotein subunit of the SDH catalytic dimer. This is Succinate dehydrogenase assembly factor 2-B, mitochondrial from Drosophila sechellia (Fruit fly).